We begin with the raw amino-acid sequence, 490 residues long: Serine/threonine-protein kinase BSK6 (490 aa).

Gly-2 is lipidated: N-myristoyl glycine. Position 25 is a phosphoserine (Ser-25). The 255-residue stretch at 56 to 310 (DNIVSEHGEK…KSLVTSLVTL (255 aa)) folds into the Protein kinase domain. ATP is bound by residues 62 to 70 (HGEKAPNVV) and Lys-84. Asp-178 (proton acceptor) is an active-site residue. Position 373 is a phosphoserine (Ser-373).

The protein belongs to the protein kinase superfamily. Ser/Thr protein kinase family. In terms of assembly, interacts with BRI1, ASK7/BIN2, ASK9/BIL2, BSK1, BSK5, BSK8 and BSK11. Phosphorylated by BRI1, ASK7/BIN2 and ASK9/BIL2.

Its subcellular location is the cell membrane. The catalysed reaction is L-seryl-[protein] + ATP = O-phospho-L-seryl-[protein] + ADP + H(+). The enzyme catalyses L-threonyl-[protein] + ATP = O-phospho-L-threonyl-[protein] + ADP + H(+). Probable serine/threonine kinase that acts as a positive regulator of brassinosteroid (BR) signaling downstream of the receptor kinase BRI1. Functions redundantly with BSK3, BSK4, BSK7 and BSK8. This chain is Serine/threonine-protein kinase BSK6, found in Arabidopsis thaliana (Mouse-ear cress).